A 132-amino-acid chain; its full sequence is Small ribosomal subunit protein uS9 (132 aa).

It belongs to the universal ribosomal protein uS9 family.

The polypeptide is Small ribosomal subunit protein uS9 (Blochmanniella pennsylvanica (strain BPEN)).